The primary structure comprises 881 residues: Serine/threonine-protein phosphatase BSL1 (881 aa).

3 Kelch repeats span residues 60-109 (GSSS…AVGT), 269-320 (RLHV…DQDP), and 338-385 (RIYV…PRFS). Disordered stretches follow at residues 368-407 (SPLLASDRTQQSSTPRFSYAARPPSGSEPSFSMSEGLSLD) and 436-464 (AGTLDEEPSTSDASSPIVESTTDGTANEG). Composition is skewed to polar residues over residues 374-383 (DRTQQSSTPR) and 445-460 (TSDASSPIVESTTDGT). Position 491 is a phosphoserine (serine 491). The interval 503 to 522 (VPMNNSDVPQPTKKFTRQKS) is disordered. The Mn(2+) site is built by aspartate 584, histidine 586, aspartate 618, and asparagine 650. Histidine 651 (proton donor) is an active-site residue. Mn(2+)-binding residues include histidine 703 and histidine 782. The tract at residues 837-881 (ILSPENSPEHSGDDAWMQELNIQRPPTPTRGRPQPDFDRSSLAYI) is disordered. A Phosphoserine modification is found at serine 839.

It belongs to the PPP phosphatase family. BSU subfamily. Interacts with CDG1 and CDL1. Mn(2+) serves as cofactor. In terms of tissue distribution, expressed in mature cauline leaves and at the tip of influorescence, including flowers. Expressed at lower level in young tissues relative to older ones.

The protein resides in the nucleus. The enzyme catalyses O-phospho-L-seryl-[protein] + H2O = L-seryl-[protein] + phosphate. The catalysed reaction is O-phospho-L-threonyl-[protein] + H2O = L-threonyl-[protein] + phosphate. Phosphatase involved in elongation process, probably by acting as a regulator of brassinolide signaling. The chain is Serine/threonine-protein phosphatase BSL1 (BSL1) from Arabidopsis thaliana (Mouse-ear cress).